The sequence spans 156 residues: Glutamate-rich protein 2 (156 aa).

2 disordered regions span residues 29–66 (LQDIDDKLSESAEDDGEDDTNDEDDDEDSNPKKNTQAP) and 116–156 (EKTQ…EDGS). Composition is skewed to acidic residues over residues 39–56 (SAEDDGEDDTNDEDDDED) and 140–156 (SDEELSDESSDEGEDGS).

The sequence is that of Glutamate-rich protein 2 (ERICH2) from Homo sapiens (Human).